A 522-amino-acid chain; its full sequence is Maturase K (522 aa).

Belongs to the intron maturase 2 family. MatK subfamily.

Its subcellular location is the plastid. The protein resides in the chloroplast. In terms of biological role, usually encoded in the trnK tRNA gene intron. Probably assists in splicing its own and other chloroplast group II introns. In Micranthus junceus (Micranthus plantagineus var. junceus), this protein is Maturase K.